Reading from the N-terminus, the 890-residue chain is Translation initiation factor IF-2 (890 aa).

Residues leucine 45–proline 302 form a disordered region. The segment covering serine 67–valine 81 has biased composition (polar residues). The span at valine 92–aspartate 217 shows a compositional bias: basic and acidic residues. Over residues glycine 252–asparagine 266 the composition is skewed to basic residues. Over residues lysine 267–alanine 280 the composition is skewed to basic and acidic residues. One can recognise a tr-type G domain in the interval proline 389–lysine 558. The G1 stretch occupies residues glycine 398 to threonine 405. Glycine 398–threonine 405 is a GTP binding site. The G2 stretch occupies residues glycine 423–histidine 427. The segment at aspartate 444 to glycine 447 is G3. Residues aspartate 444–histidine 448 and asparagine 498–aspartate 501 each bind GTP. A G4 region spans residues asparagine 498–aspartate 501. Residues serine 534–lysine 536 are G5. Lysine 808 is modified (N6-acetyllysine).

It belongs to the TRAFAC class translation factor GTPase superfamily. Classic translation factor GTPase family. IF-2 subfamily.

Its subcellular location is the cytoplasm. Its function is as follows. One of the essential components for the initiation of protein synthesis. Protects formylmethionyl-tRNA from spontaneous hydrolysis and promotes its binding to the 30S ribosomal subunits. Also involved in the hydrolysis of GTP during the formation of the 70S ribosomal complex. This is Translation initiation factor IF-2 from Shigella dysenteriae serotype 1 (strain Sd197).